Here is a 141-residue protein sequence, read N- to C-terminus: MVHSQLPVAGPLRLLCALLLLPSATMIPGGLSPRSVTDPDVQEAAEFAVQEYNALSANAYYYKQLRIVEAQSQVVSGAKYYLTMELMKTKCAKTTGKPKVYKEIQNCELPPKAQQEKLNCRFQVWSRPWLEKMELTKMSCN.

Residues 1–26 (MVHSQLPVAGPLRLLCALLLLPSATM) form the signal peptide. The Cystatin domain maps to 29–129 (GGLSPRSVTD…CRFQVWSRPW (101 aa)). A Secondary area of contact motif is present at residues 73 to 77 (QVVSG). 2 cysteine pairs are disulfide-bonded: cysteine 91-cysteine 107 and cysteine 120-cysteine 140.

It belongs to the cystatin family. Expressed at a low level by the venom gland (at protein level).

Its subcellular location is the secreted. In terms of biological role, inhibits various C1 cysteine proteases including cathepsin L, papain and cathepsin B. This protein has no toxic activity and its function in the venom is unknown. It may play a role as a housekeeping or regulatory protein. The chain is Cystatin from Pseudechis porphyriacus (Red-bellied black snake).